A 597-amino-acid polypeptide reads, in one-letter code: Putative Xaa-Pro dipeptidyl-peptidase (597 aa).

Residues Ser224, Asp336, and His367 each act as charge relay system in the active site.

This sequence belongs to the peptidase S15 family.

The catalysed reaction is Hydrolyzes Xaa-Pro-|- bonds to release unblocked, N-terminal dipeptides from substrates including Ala-Pro-|-p-nitroanilide and (sequentially) Tyr-Pro-|-Phe-Pro-|-Gly-Pro-|-Ile.. The chain is Putative Xaa-Pro dipeptidyl-peptidase from Bacillus anthracis.